We begin with the raw amino-acid sequence, 475 residues long: Probable pectate lyase 7 (475 aa).

An N-terminal signal peptide occupies residues 1–24 (METARLFKLVCVICIASLIPTIRA). N-linked (GlcNAc...) asparagine glycans are attached at residues Asn67 and Asn96. Positions 91 to 117 (ISSPTNSTRRSLTGRGKGKGKGKWSKL) are disordered. Asp271, Asp295, and Asp299 together coordinate Ca(2+). Residue Arg351 is part of the active site.

It belongs to the polysaccharide lyase 1 family. Ca(2+) is required as a cofactor.

It carries out the reaction Eliminative cleavage of (1-&gt;4)-alpha-D-galacturonan to give oligosaccharides with 4-deoxy-alpha-D-galact-4-enuronosyl groups at their non-reducing ends.. The protein operates within glycan metabolism; pectin degradation; 2-dehydro-3-deoxy-D-gluconate from pectin: step 2/5. In Arabidopsis thaliana (Mouse-ear cress), this protein is Probable pectate lyase 7.